Here is a 158-residue protein sequence, read N- to C-terminus: C-type lectin lectoxin-Enh5 (158 aa).

Residues 1–23 (MGQFTVVSLGLLAVFLSLSGAKG) form the signal peptide. Intrachain disulfides connect cysteine 26–cysteine 37, cysteine 54–cysteine 154, and cysteine 129–cysteine 146. Positions 33-155 (RNGVCNKLFP…CASLHPFICQ (123 aa)) constitute a C-type lectin domain. The short motif at 119–121 (EPN) is the Mannose-binding element. Glutamate 127, asparagine 142, and aspartate 143 together coordinate Ca(2+).

This sequence belongs to the true venom lectin family. In terms of tissue distribution, expressed by the venom gland.

Its subcellular location is the secreted. Functionally, mannose-binding lectin which recognizes specific carbohydrate structures and agglutinates a variety of animal cells by binding to cell-surface glycoproteins and glycolipids. May be a calcium-dependent lectin. The sequence is that of C-type lectin lectoxin-Enh5 from Pseudoferania polylepis (Macleay's water snake).